The sequence spans 178 residues: Caveolin-1 (178 aa).

The residue at position 2 (serine 2) is an N-acetylserine. Serine 2 bears the Phosphoserine mark. The tract at residues 2–94 is required for homooligomerization; that stretch reads SGGKYVDSEG…WKASFTTFTV (93 aa). The Cytoplasmic portion of the chain corresponds to 2–104; the sequence is SGGKYVDSEG…TKYWFYRLLS (103 aa). Residue lysine 5 is modified to N6-acetyllysine; alternate. Lysine 5 is covalently cross-linked (Glycyl lysine isopeptide (Lys-Gly) (interchain with G-Cter in ubiquitin); alternate). At tyrosine 6 the chain carries Phosphotyrosine. Residue serine 9 is modified to Phosphoserine. Tyrosine 14 carries the post-translational modification Phosphotyrosine; by ABL1. The residue at position 25 (tyrosine 25) is a Phosphotyrosine. Glycyl lysine isopeptide (Lys-Gly) (interchain with G-Cter in ubiquitin) cross-links involve residues lysine 26, lysine 30, lysine 39, lysine 47, and lysine 57. The tract at residues 82–94 is interaction with CAVIN3; that stretch reads DGIWKASFTTFTV. Residues 105–125 constitute an intramembrane region (helical); that stretch reads TLFGIPMALIWGIYFAILSFL. Residues 126-178 lie on the Cytoplasmic side of the membrane; sequence HIWAVVPCIKSFLIEIQCIGRVYSIYIHTFCDPLFEAVGKLFSNIRINMQKEI. Residues 131–142 are interacts with SPRY1, SPRY2, SPRY3 and SPRY4; it reads VPCIKSFLIEIQ. 3 S-palmitoyl cysteine lipidation sites follow: cysteine 133, cysteine 143, and cysteine 156. Positions 149 to 160 are interacts with SPRY1, SPRY2, and SPRY4; sequence SIYIHTFCDPLF. Positions 167-178 are interacts with SPRY1, SPRY2, SPRY3 and SPRY4; that stretch reads FSNIRINMQKEI.

Belongs to the caveolin family. As to quaternary structure, homooligomer. Interacts with GLIPR2. Interacts with NOSTRIN. Interacts with SNAP25 and STX1A. Interacts (via the N-terminus) with DPP4; the interaction is direct. Interacts with CTNNB1, CDH1 and JUP. Interacts with PACSIN2; this interaction induces membrane tubulation. Interacts with SLC7A9. Interacts with BMX and BTK. Interacts with TGFBR1. Interacts with CAVIN3 (via leucine-zipper domain) in a cholesterol-sensitive manner. Interacts with CAVIN1. Interacts with EHD2 in a cholesterol-dependent manner. Forms a ternary complex with UBXN6 and VCP; mediates CAV1 targeting to lysosomes for degradation. Interacts with ABCG1; this interaction regulates ABCG1-mediated cholesterol efflux. Interacts with NEU3; this interaction enhances NEU3 sialidase activity within caveola. Interacts (via C-terminus) with SPRY1, SPRY2 (via C-terminus), SPRY3, and SPRY4. Interacts with IGFBP5; this interaction allows trafficking of IGFBP5 from the plasma membrane to the nucleus. Phosphorylated at Tyr-14 by ABL1 in response to oxidative stress. In terms of processing, ubiquitinated. Undergo monoubiquitination and multi- and/or polyubiquitination. Monoubiquitination of N-terminal lysines promotes integration in a ternary complex with UBXN6 and VCP which promotes oligomeric CAV1 targeting to lysosomes for degradation. Ubiquitinated by ZNRF1; leading to degradation and modulation of the TLR4-mediated immune response.

The protein resides in the golgi apparatus membrane. It localises to the cell membrane. It is found in the membrane. Its subcellular location is the caveola. The protein localises to the membrane raft. Functionally, may act as a scaffolding protein within caveolar membranes. Forms a stable heterooligomeric complex with CAV2 that targets to lipid rafts and drives caveolae formation. Mediates the recruitment of CAVIN proteins (CAVIN1/2/3/4) to the caveolae. Interacts directly with G-protein alpha subunits and can functionally regulate their activity. Involved in the costimulatory signal essential for T-cell receptor (TCR)-mediated T-cell activation. Its binding to DPP4 induces T-cell proliferation and NF-kappa-B activation in a T-cell receptor/CD3-dependent manner. Recruits CTNNB1 to caveolar membranes and may regulate CTNNB1-mediated signaling through the Wnt pathway. Negatively regulates TGFB1-mediated activation of SMAD2/3 by mediating the internalization of TGFBR1 from membrane rafts leading to its subsequent degradation. Binds 20(S)-hydroxycholesterol (20(S)-OHC). The chain is Caveolin-1 (CAV1) from Dasypus novemcinctus (Nine-banded armadillo).